Consider the following 349-residue polypeptide: Dihydroorotate dehydrogenase (quinone) (349 aa).

Residues 59 to 63 and Thr83 contribute to the FMN site; that span reads PGFDK. Lys63 contacts substrate. 108 to 112 is a substrate binding site; the sequence is NRMGF. Positions 142 and 173 each coordinate FMN. Asn173 serves as a coordination point for substrate. Ser176 acts as the Nucleophile in catalysis. Position 178 (Asn178) interacts with substrate. Lys212 and Ser240 together coordinate FMN. 241–242 is a binding site for substrate; that stretch reads NT. FMN contacts are provided by residues Gly262, Gly291, and 312–313; that span reads YS.

This sequence belongs to the dihydroorotate dehydrogenase family. Type 2 subfamily. Monomer. FMN serves as cofactor.

It is found in the cell membrane. It carries out the reaction (S)-dihydroorotate + a quinone = orotate + a quinol. It participates in pyrimidine metabolism; UMP biosynthesis via de novo pathway; orotate from (S)-dihydroorotate (quinone route): step 1/1. Its function is as follows. Catalyzes the conversion of dihydroorotate to orotate with quinone as electron acceptor. This is Dihydroorotate dehydrogenase (quinone) from Novosphingobium aromaticivorans (strain ATCC 700278 / DSM 12444 / CCUG 56034 / CIP 105152 / NBRC 16084 / F199).